Reading from the N-terminus, the 264-residue chain is Apolipoprotein A-I (264 aa).

The N-terminal stretch at 1–18 (MKAVVLTVAVLFLTGSQA) is a signal peptide. 2 repeat units span residues 67-88 (LKLL…EQLG) and 89-110 (PVTQ…QEMN). Residues 67-264 (LKLLDNWDTL…DDAAKKLSSQ (198 aa)) form a 10 X approximate tandem repeats region. Residue methionine 109 is modified to Methionine sulfoxide. Residues 111–121 (KDLEEVKQKVQ) form a 3; half-length repeat. 3 tandem repeats follow at residues 122 to 143 (PYLE…QKVE), 144 to 165 (PLST…EKLT), and 166 to 187 (PLGE…TQLA). The stretch at 188 to 207 (PYSDKMRERLAERLTALKDS) is one 7; truncated repeat. Methionine sulfoxide is present on methionine 193. Copy 8 of the repeat occupies 208–229 (ASFAEYHAKASEHLKTLREKAK). A 9; half-length repeat occupies 230–240 (PAIEDLGQGLL). The stretch at 241-264 (PVLENLKASFLSAIDDAAKKLSSQ) is repeat 10.

The protein belongs to the apolipoprotein A1/A4/E family. Homodimer. Interacts with APOA1BP and CLU. Component of a sperm activating protein complex (SPAP), consisting of APOA1, an immunoglobulin heavy chain, an immunoglobulin light chain and albumin. Interacts with NDRG1. Interacts with SCGB3A2. Interacts with NAXE and YJEFN3. In terms of processing, glycosylated. Post-translationally, palmitoylated. Phosphorylation sites are present in the extracellular medium.

It is found in the secreted. Its function is as follows. Participates in the reverse transport of cholesterol from tissues to the liver for excretion by promoting cholesterol efflux from tissues and by acting as a cofactor for the lecithin cholesterol acyltransferase (LCAT). As part of the SPAP complex, activates spermatozoa motility. This is Apolipoprotein A-I (APOA1) from Castor canadensis (American beaver).